Consider the following 200-residue polypeptide: GTP-binding protein rho5 (200 aa).

13–20 (GDGACGKT) is a binding site for GTP. Residues 35–43 (YVPTVFENY) carry the Effector region motif. GTP contacts are provided by residues 60–64 (DTAGQ) and 118–121 (CKVD). Cys197 is modified (cysteine methyl ester). A lipid anchor (S-geranylgeranyl cysteine) is attached at Cys197. Positions 198 to 200 (ILL) are cleaved as a propeptide — removed in mature form.

This sequence belongs to the small GTPase superfamily. Rho family.

The protein resides in the cell membrane. The polypeptide is GTP-binding protein rho5 (rho5) (Schizosaccharomyces pombe (strain 972 / ATCC 24843) (Fission yeast)).